Reading from the N-terminus, the 252-residue chain is Small ribosomal subunit protein uS2A (252 aa).

Serine 2 is modified (N-acetylserine). The interval 209–252 is disordered; it reads EVEQQVAEEATTEEAGEEEAKEEVTEEQAEATEWAEENADNVEW. Positions 218–252 are enriched in acidic residues; it reads ATTEEAGEEEAKEEVTEEQAEATEWAEENADNVEW.

The protein belongs to the universal ribosomal protein uS2 family. Component of the small ribosomal subunit. Mature ribosomes consist of a small (40S) and a large (60S) subunit. The 40S subunit contains about 33 different proteins and 1 molecule of RNA (18S). The 60S subunit contains about 49 different proteins and 3 molecules of RNA (25S, 5.8S and 5S). Interacts with RPS21.

It localises to the cytoplasm. Functionally, required for the assembly and/or stability of the 40S ribosomal subunit. Required for the processing of the 20S rRNA-precursor to mature 18S rRNA in a late step of the maturation of 40S ribosomal subunits. The chain is Small ribosomal subunit protein uS2A from Saccharomyces cerevisiae (strain RM11-1a) (Baker's yeast).